The sequence spans 301 residues: Tetrapeptide repeat homeobox protein 2 (301 aa).

2 disordered regions span residues 1–27 (MQDP…RTVY) and 273–301 (SLST…LLDL). 2 stretches are compositionally biased toward basic and acidic residues: residues 16–26 (PPRRQRQERTV) and 281–292 (YKEEDGFVDKNH). Positions 20 to 79 (QRQERTVYTESQQKVLEFYFQKDQYPNYDQRLNLAEMLSLREQQLQVWFKNRRAKLARER) form a DNA-binding region, homeobox.

This sequence belongs to the paired homeobox family.

It is found in the nucleus. In terms of biological role, transcription factor expressed after fertilization required for zygotic genome activation (ZGA), a critical event in early embryonic development during which the developmental control passes from maternally provided mRNAs to the expression of the zygotic genome after fertilization. Binds and activates expression of key ZGA marker genes, such as NANOGNB, ZSCAN4, DUXB, KLF5 and DPPA3. Binds to regulatory DNA sequences containing a 5'-TAATCC-3' sequence motif. This chain is Tetrapeptide repeat homeobox protein 2, found in Homo sapiens (Human).